Reading from the N-terminus, the 2392-residue chain is Protein Ycf2 (2392 aa).

1658–1665 serves as a coordination point for ATP; it reads GPTEIGKS.

The protein belongs to the Ycf2 family.

The protein localises to the plastid. It is found in the chloroplast stroma. In terms of biological role, probable ATPase of unknown function. Its presence in a non-photosynthetic plant (Epifagus virginiana) and experiments in tobacco indicate that it has an essential function which is probably not related to photosynthesis. In Anthoceros angustus (Hornwort), this protein is Protein Ycf2.